Consider the following 450-residue polypeptide: RUN domain-containing protein 3B (450 aa).

The 133-residue stretch at 48-180 (DDTSAEFINF…IDFSFCLKGE (133 aa)) folds into the RUN domain. Positions 203 to 225 (DSISSDEEEMRTLGSSGSEAGTP) are disordered. The stretch at 291–317 (ISHKLEKEQLEIIILELQDQLTVLKNH) forms a coiled coil.

It belongs to the RUNDC3 family.

This Danio rerio (Zebrafish) protein is RUN domain-containing protein 3B (rundc3b).